Reading from the N-terminus, the 147-residue chain is Probable 4-amino-4-deoxy-L-arabinose-phosphoundecaprenol flippase subunit ArnF (147 aa).

The Cytoplasmic segment spans residues 1 to 23 (MSNDHPQGQLPASPARSALKGYL). A helical membrane pass occupies residues 24–44 (YVLGSILLVTAAQLGMKWGVI). Residues 45–62 (QLPTWQMDLAVMLAHPLP) lie on the Periplasmic side of the membrane. The helical transmembrane segment at 63–83 (LLVILAGVGCYALSLLCWLAA) threads the bilayer. The Cytoplasmic segment spans residues 84–93 (LHSTPLNIAY). A helical membrane pass occupies residues 94 to 114 (PLLSTSYALVYLLAVNIPLFA). The Periplasmic portion of the chain corresponds to 115–121 (EPLEPGK). Residues 122–142 (ALGVLFILLGAVLVGIKPAAG) form a helical membrane-spanning segment. Residues 143–147 (TKQTG) lie on the Cytoplasmic side of the membrane.

Belongs to the ArnF family. In terms of assembly, heterodimer of ArnE and ArnF.

It localises to the cell inner membrane. It participates in bacterial outer membrane biogenesis; lipopolysaccharide biosynthesis. In terms of biological role, translocates 4-amino-4-deoxy-L-arabinose-phosphoundecaprenol (alpha-L-Ara4N-phosphoundecaprenol) from the cytoplasmic to the periplasmic side of the inner membrane. This chain is Probable 4-amino-4-deoxy-L-arabinose-phosphoundecaprenol flippase subunit ArnF, found in Aeromonas hydrophila subsp. hydrophila (strain ATCC 7966 / DSM 30187 / BCRC 13018 / CCUG 14551 / JCM 1027 / KCTC 2358 / NCIMB 9240 / NCTC 8049).